The following is a 295-amino-acid chain: Dehydrodolichyl diphosphate synthase 6 (295 aa).

The protein belongs to the UPP synthase family. It depends on Mg(2+) as a cofactor.

It participates in protein modification; protein glycosylation. Catalyzes cis-prenyl chain elongation to produce the polyprenyl backbone of dolichol, a glycosyl carrier-lipid required for the biosynthesis of several classes of glycoprotein. In Arabidopsis thaliana (Mouse-ear cress), this protein is Dehydrodolichyl diphosphate synthase 6.